The primary structure comprises 592 residues: Probable translation initiation factor IF-2 (592 aa).

In terms of domain architecture, tr-type G spans 5–226 (IRSPFVVVMG…AGVSQRFIPR (222 aa)). A G1 region spans residues 14 to 21 (GHVDVGKT). 14-21 (GHVDVGKT) contacts GTP. Positions 39–43 (MITQH) are G2. The tract at residues 80–83 (DTPG) is G3. GTP contacts are provided by residues 80 to 84 (DTPGH) and 134 to 137 (NKLD). The G4 stretch occupies residues 134 to 137 (NKLD). The tract at residues 202–204 (SAV) is G5.

It belongs to the TRAFAC class translation factor GTPase superfamily. Classic translation factor GTPase family. IF-2 subfamily.

Function in general translation initiation by promoting the binding of the formylmethionine-tRNA to ribosomes. Seems to function along with eIF-2. This chain is Probable translation initiation factor IF-2, found in Pyrobaculum calidifontis (strain DSM 21063 / JCM 11548 / VA1).